The following is a 265-amino-acid chain: Glutamate racemase (265 aa).

Residues 12-13 (DS) and 44-45 (YG) each bind substrate. Catalysis depends on Cys75, which acts as the Proton donor/acceptor. A substrate-binding site is contributed by 76 to 77 (NT). The active-site Proton donor/acceptor is the Cys186. Residue 187–188 (TH) coordinates substrate.

This sequence belongs to the aspartate/glutamate racemases family.

It catalyses the reaction L-glutamate = D-glutamate. It participates in cell wall biogenesis; peptidoglycan biosynthesis. Its function is as follows. Provides the (R)-glutamate required for cell wall biosynthesis. The chain is Glutamate racemase from Pseudomonas putida (strain GB-1).